The following is a 284-amino-acid chain: RNase adapter protein RapZ (284 aa).

8–15 (GRSGSGKS) contacts ATP. 56–59 (DVRN) lines the GTP pocket. The interval 266 to 284 (RSRGKNVQSRHRTLEKRKT) is RNA-binding.

The protein belongs to the RapZ-like family. RapZ subfamily. In terms of assembly, homotrimer.

Modulates the synthesis of GlmS, by affecting the processing and stability of the regulatory small RNA GlmZ. When glucosamine-6-phosphate (GlcN6P) concentrations are high in the cell, RapZ binds GlmZ and targets it to cleavage by RNase E. Consequently, GlmZ is inactivated and unable to activate GlmS synthesis. Under low GlcN6P concentrations, RapZ is sequestered and inactivated by an other regulatory small RNA, GlmY, preventing GlmZ degradation and leading to synthesis of GlmS. This chain is RNase adapter protein RapZ, found in Escherichia fergusonii (strain ATCC 35469 / DSM 13698 / CCUG 18766 / IAM 14443 / JCM 21226 / LMG 7866 / NBRC 102419 / NCTC 12128 / CDC 0568-73).